Consider the following 527-residue polypeptide: Protein SDS24 (527 aa).

Low complexity-rich tracts occupy residues 1 to 22 (MAST…LPTS) and 55 to 74 (TPPT…TPAP). The disordered stretch occupies residues 1–75 (MASTSNTFPP…PGCAATPAPL (75 aa)). Ser-94 bears the Phosphoserine mark. CBS domains are found at residues 114-175 (IEQN…KITV), 198-256 (LTPK…NARS), 283-342 (TSRQ…QYPL), and 443-512 (LNSH…GNKE). Over residues 424–447 (AQSSANGATPMSKSSSSTSLNSHS) the composition is skewed to low complexity. Disordered stretches follow at residues 424-478 (AQSS…TNTP) and 508-527 (TGNK…SIAM). Phosphoserine occurs at positions 458 and 524.

This sequence belongs to the SDS23 family.

It is found in the cytoplasm. The protein localises to the nucleus. Involved in DNA replication and cell separation during budding. The sequence is that of Protein SDS24 (SDS24) from Saccharomyces cerevisiae (strain YJM789) (Baker's yeast).